A 1093-amino-acid polypeptide reads, in one-letter code: TATA element modulatory factor (1093 aa).

Disordered regions lie at residues 38–80 (WAET…SPKA) and 108–189 (TIQK…DMKV). Over residues 51-70 (SPVSGGWDTSTWGLKSNTEP) the composition is skewed to polar residues. Phosphoserine occurs at positions 72, 77, 112, and 136. Basic and acidic residues predominate over residues 123–137 (QRPEEEVKSSLHESL). Over residues 139-158 (IGQSRTPETTESQVKDSSLC) the composition is skewed to polar residues. Over residues 173 to 187 (TEGKHEETVNKESDM) the composition is skewed to basic and acidic residues. A phosphoserine mark is found at Ser-199 and Ser-217. Positions 229-238 (PKEQKHEDRQ) are enriched in basic and acidic residues. Disordered regions lie at residues 229-260 (PKEQ…SDIE) and 266-285 (SVIS…SKSS). Over residues 246 to 257 (VSTFSSGTSTTS) the composition is skewed to low complexity. 9 positions are modified to phosphoserine: Ser-328, Ser-330, Ser-333, Ser-338, Ser-344, Ser-413, Ser-542, Ser-925, and Ser-928. Positions 333-342 (SLDSRSVSEI) are interaction with Elongin BC complex. A coiled-coil region spans residues 439-922 (EALSEKEDVC…QETIKEKERK (484 aa)). A disordered region spans residues 919–939 (KERKPFSVSSTPTMSRSSSIS). A compositionally biased stretch (low complexity) spans 925–939 (SVSSTPTMSRSSSIS). Position 929 is a phosphothreonine (Thr-929). Residue Ser-933 is modified to Phosphoserine. Positions 984 to 1092 (SIIENLQSQL…QIDELLRQSL (109 aa)) form a coiled coil.

Interacts with TRNP1; may regulate TRNP1 proteasomal degradation. Component of the SNF/SWI transcription factor complexes. Interacts with RAB6A. Interacts with STAT3 and FER. Interacts with TCEB1. In terms of processing, phosphorylated by FER.

It localises to the cytoplasm. The protein resides in the nucleus. It is found in the golgi apparatus membrane. In terms of biological role, potential coactivator of the androgen receptor. Mediates STAT3 degradation. May play critical roles in two RAB6-dependent retrograde transport processes: one from endosomes to the Golgi and the other from the Golgi to the ER. This protein binds the HIV-1 TATA element and inhibits transcriptional activation by the TATA-binding protein (TBP). The chain is TATA element modulatory factor (TMF1) from Homo sapiens (Human).